The primary structure comprises 111 residues: Prothymosin alpha (111 aa).

Residue Met-1 is modified to N-acetylmethionine. The interval 1–111 (MSDAAVDTSS…TKKQKTEEDD (111 aa)) is disordered. Ser-2 is modified (N-acetylserine; in Prothymosin alpha, N-terminally processed). At Ser-2 the chain carries Phosphoserine. Thr-8 is modified (phosphothreonine). Residues Ser-9 and Ser-10 each carry the phosphoserine modification. Thr-13 and Thr-14 each carry phosphothreonine. The segment covering 13 to 31 (TTKDLKEKKEVVEEAENGR) has biased composition (basic and acidic residues). N6-acetyllysine; alternate is present on Lys-15. Lys-15 is subject to N6-succinyllysine; alternate. Positions 43–84 (ENGEQEADNEVDEEEEEGGEEEEEEEEGDGEEEDGDEDEEAE) are enriched in acidic residues. Residues 101–111 (DTKKQKTEEDD) show a composition bias toward basic and acidic residues. A Phosphothreonine modification is found at Thr-102. Lys-103 carries the N6-acetyllysine; alternate modification. A Glycyl lysine isopeptide (Lys-Gly) (interchain with G-Cter in SUMO2); alternate cross-link involves residue Lys-103. Thr-107 is subject to Phosphothreonine.

The protein belongs to the pro/parathymosin family. Interacts with NUPR1; regulates apoptotic process. Covalently linked to a small RNA of about 20 nucleotides.

The protein resides in the nucleus. Its function is as follows. Prothymosin alpha may mediate immune function by conferring resistance to certain opportunistic infections. In Mus musculus (Mouse), this protein is Prothymosin alpha (Ptma).